We begin with the raw amino-acid sequence, 506 residues long: 2,3-bisphosphoglycerate-independent phosphoglycerate mutase (506 aa).

Mn(2+)-binding residues include Asp13 and Ser63. Ser63 acts as the Phosphoserine intermediate in catalysis. Substrate is bound by residues His124, 153–154 (RD), Arg183, Arg189, 255–258 (RADR), and Lys331. Asp397, His401, Asp438, His439, and His457 together coordinate Mn(2+).

This sequence belongs to the BPG-independent phosphoglycerate mutase family. In terms of assembly, monomer. Mn(2+) is required as a cofactor.

It catalyses the reaction (2R)-2-phosphoglycerate = (2R)-3-phosphoglycerate. Its pathway is carbohydrate degradation; glycolysis; pyruvate from D-glyceraldehyde 3-phosphate: step 3/5. Catalyzes the interconversion of 2-phosphoglycerate and 3-phosphoglycerate. This Ruegeria sp. (strain TM1040) (Silicibacter sp.) protein is 2,3-bisphosphoglycerate-independent phosphoglycerate mutase.